Here is a 556-residue protein sequence, read N- to C-terminus: 2,3-bisphosphoglycerate-independent phosphoglycerate mutase (556 aa).

Mn(2+) is bound by residues aspartate 25 and serine 78. The active-site Phosphoserine intermediate is serine 78. Substrate contacts are provided by residues histidine 137, 167–168, arginine 203, arginine 210, 283–286, and lysine 358; these read RD and RADR. 5 residues coordinate Mn(2+): aspartate 427, histidine 431, aspartate 468, histidine 469, and histidine 498.

This sequence belongs to the BPG-independent phosphoglycerate mutase family. Monomer. Mn(2+) is required as a cofactor. Found ubiquitously in germinating seed.

The protein resides in the cytoplasm. The enzyme catalyses (2R)-2-phosphoglycerate = (2R)-3-phosphoglycerate. It functions in the pathway carbohydrate degradation; glycolysis; pyruvate from D-glyceraldehyde 3-phosphate: step 3/5. Its function is as follows. Catalyzes the interconversion of 2-phosphoglycerate and 3-phosphoglycerate. The protein is 2,3-bisphosphoglycerate-independent phosphoglycerate mutase of Ricinus communis (Castor bean).